Reading from the N-terminus, the 239-residue chain is Pimeloyl-[acyl-carrier protein] methyl ester esterase (239 aa).

Substrate contacts are provided by residues W20, 77-78, and 138-142; these read SM and FISLQ. S77 acts as the Nucleophile in catalysis. Catalysis depends on residues D192 and H220. H220 is a substrate binding site.

It belongs to the AB hydrolase superfamily. Carboxylesterase BioH family. Monomer.

The protein localises to the cytoplasm. The catalysed reaction is 6-carboxyhexanoyl-[ACP] methyl ester + H2O = 6-carboxyhexanoyl-[ACP] + methanol + H(+). It functions in the pathway cofactor biosynthesis; biotin biosynthesis. In terms of biological role, the physiological role of BioH is to remove the methyl group introduced by BioC when the pimeloyl moiety is complete. It allows to synthesize pimeloyl-ACP via the fatty acid synthetic pathway through the hydrolysis of the ester bonds of pimeloyl-ACP esters. The protein is Pimeloyl-[acyl-carrier protein] methyl ester esterase of Legionella pneumophila (strain Lens).